A 329-amino-acid chain; its full sequence is NADH-quinone oxidoreductase subunit H (329 aa).

The next 9 membrane-spanning stretches (helical) occupy residues 9 to 29 (LIKI…ATYI), 42 to 62 (GPCY…IKLF), 75 to 95 (FIFT…MAPI), 117 to 137 (IGFL…ILAG), 154 to 174 (IQLL…LMVV), 188 to 208 (GGFL…FLIA), 238 to 258 (LKWG…SFVI), 260 to 280 (IVFF…AILI), and 309 to 329 (WKIM…IILI).

It belongs to the complex I subunit 1 family. As to quaternary structure, NDH-1 is composed of 14 different subunits. Subunits NuoA, H, J, K, L, M, N constitute the membrane sector of the complex.

The protein resides in the cell inner membrane. The catalysed reaction is a quinone + NADH + 5 H(+)(in) = a quinol + NAD(+) + 4 H(+)(out). Its function is as follows. NDH-1 shuttles electrons from NADH, via FMN and iron-sulfur (Fe-S) centers, to quinones in the respiratory chain. The immediate electron acceptor for the enzyme in this species is believed to be ubiquinone. Couples the redox reaction to proton translocation (for every two electrons transferred, four hydrogen ions are translocated across the cytoplasmic membrane), and thus conserves the redox energy in a proton gradient. This subunit may bind ubiquinone. This chain is NADH-quinone oxidoreductase subunit H, found in Helicobacter pylori (strain G27).